An 825-amino-acid chain; its full sequence is Glycerol-3-phosphate acyltransferase (825 aa).

An HXXXXD motif motif is present at residues 306-311 (CHRSHM). Positions 802–825 (SASSSTEMEASTSSSQTAEETTQG) are disordered.

This sequence belongs to the GPAT/DAPAT family.

The protein resides in the cell inner membrane. It carries out the reaction sn-glycerol 3-phosphate + an acyl-CoA = a 1-acyl-sn-glycero-3-phosphate + CoA. The protein operates within phospholipid metabolism; CDP-diacylglycerol biosynthesis; CDP-diacylglycerol from sn-glycerol 3-phosphate: step 1/3. The chain is Glycerol-3-phosphate acyltransferase from Pectobacterium atrosepticum (strain SCRI 1043 / ATCC BAA-672) (Erwinia carotovora subsp. atroseptica).